A 110-amino-acid polypeptide reads, in one-letter code: Iron-sulfur cluster assembly protein CyaY (110 aa).

Belongs to the frataxin family.

Functionally, involved in iron-sulfur (Fe-S) cluster assembly. May act as a regulator of Fe-S biogenesis. The chain is Iron-sulfur cluster assembly protein CyaY from Variovorax paradoxus (strain S110).